Reading from the N-terminus, the 139-residue chain is Chemical-damaging agent resistance protein B (139 aa).

Belongs to the CAPAB/TerDEXZ family.

Its function is as follows. Not known; could confer methyl methane sulfonate (MMS), mitomycin C (MC), and UV resistance. The sequence is that of Chemical-damaging agent resistance protein B from Clostridium acetobutylicum.